The sequence spans 461 residues: MSFRSVLLTALLSLSFTTTMQAAHHHYHRYTDKLHRQNHKKDLISPKPTEQEACNTSSLSKELIPLSEQRGLLSPICDFISERPCLHGVSVRNLKQALKNSAGTQIALDWSILPQWFNPRVSHAPKLSIRDFGYSAHQTVTEATPPCWQNCFNPSAAVTIYDSSYGKGVFQISYTLVRYWRENAATAGDAMMLAGSINDYPSRQNIFSQFTFSQNFPNERVSLTIGQYSLYAIDGTLYNNDQQLGFISYALSQNPTATYSSGSLGAYLQVAPTASTSLQIGFQDAYNISGSSIKWSNLTKNRYNFHGFASWAPRCCLGSGQYSVLLYVTRQVPEQMEQTMGWSVNASQHISSKLYVFGRYSGVTGHVFPINRTYSFGMASANLFNRNPQDLFGIACAFNNVHLSASPNTKRKYETVIEGFATIGCGPYLSFAPDFQLYLYPALRPNKQSARVYSVRANLAI.

The signal sequence occupies residues 1-22; it reads MSFRSVLLTALLSLSFTTTMQA.

Belongs to the OprB family.

It is found in the cell outer membrane. Functionally, facilitates L-arginine uptake, as part of the AaxABC system. The arginine uptake by the bacterium in the macrophage may be a virulence factor against the host innate immune response. In Chlamydia trachomatis serovar D (strain ATCC VR-885 / DSM 19411 / UW-3/Cx), this protein is Porin AaxA (aaxA).